The sequence spans 446 residues: MGYTKAEILKALKGENVKFLRLQITDILGVVKNVEVPESQFEKALDGEIMFDGSSIEGFTRIEESDMLLRPDYNTFVILPDLVEDPKRGRVARLICDVYYPDGRPFEGDPRYVLKRQIERLKKLGFDNLYAGPEPEFFLFLRTPEGLPTTETHDRAGYFDLAPIDKGEEARRDMVNALVAMGFEIEAAHHEVAPGQHEIDFKYADALTTADNIATFKWVVKRIALNHGLHATFLPKPIRGINGSGMHTHLSLFKDGENAFYDPNAEYQLSQTALHFIAGLLEHAAGMVAVTNPLVNSYKRLTPGYEAPTNIAWSASNRSAMIRIPARRGVGTRAELRMPDPSCNPYLALAVMAAAGADGIERKLLPPPPIQRNIYQMTVRERRKHKIRELPGTLREALEALRKDPVIREALGEHVYTHFLQAKQMEWDDYRVTVHQWELDRYLATY.

The region spanning Glu15 to Gly103 is the GS beta-grasp domain. The 337-residue stretch at Pro110–Tyr446 folds into the GS catalytic domain. 2 residues coordinate Mg(2+): Glu134 and Glu136. Glu186 lines the ATP pocket. The Mg(2+) site is built by Glu191 and Glu198. L-glutamate contacts are provided by residues Asn242–Gly243 and Gly243. His247 lines the Mg(2+) pocket. Ser251 contributes to the ATP binding site. Positions 300, 306, and 318 each coordinate L-glutamate. 2 residues coordinate ATP: Arg318 and Arg323. Residue Glu335 coordinates Mg(2+). An L-glutamate-binding site is contributed by Arg337.

It belongs to the glutamine synthetase family. As to quaternary structure, interacts with GCBP (TTHA1554). Requires Mg(2+) as cofactor.

It localises to the cytoplasm. The catalysed reaction is L-glutamate + NH4(+) + ATP = L-glutamine + ADP + phosphate + H(+). With respect to regulation, activity increases by approximately two-fold in the presence of GCBP. In terms of biological role, catalyzes the ATP-dependent biosynthesis of glutamine from glutamate and ammonia. This chain is Glutamine synthetase, found in Thermus thermophilus (strain ATCC 27634 / DSM 579 / HB8).